The sequence spans 809 residues: Probable replication endonuclease from prophage-like region (809 aa).

Residues tyrosine 503 and tyrosine 507 each act as O-(5'-phospho-DNA)-tyrosine intermediate in the active site.

It belongs to the phage GPA family.

Possible endonuclease which induces a single-strand cut and initiates DNA replication. The chain is Probable replication endonuclease from prophage-like region from Salmonella typhimurium (strain LT2 / SGSC1412 / ATCC 700720).